Consider the following 182-residue polypeptide: Hexose transport activator protein (182 aa).

The tract at residues 46–65 (GIWGPMEKKPGGVGKKKGSE) is disordered.

In terms of biological role, multicopy expression suppresses glucose-uptake defects in various yeast mutants. The polypeptide is Hexose transport activator protein (AHT1) (Saccharomyces cerevisiae (strain ATCC 204508 / S288c) (Baker's yeast)).